The sequence spans 746 residues: NAD(P)H-quinone oxidoreductase subunit 5, chloroplastic (746 aa).

The next 16 helical transmembrane spans lie at 9–29, 40–60, 89–109, 125–145, 147–167, 185–205, 219–239, 258–278, 280–300, 327–347, 354–374, 396–416, 425–445, 546–566, 607–627, and 723–743; these read WMIPFIPLPVPILLGMGLLLF, WAFLSIFLLSIVMIFSIDLSI, IDPLTSIMSILITTVGILVLI, FAYMSFFNTSMLGLVTSSNLI, VYIFWELVGMCSYLLIGFWFT, GDFGLLLGILGLYWITGSFEF, NQVHFLFVTLCAFLLFAGPVA, TPISALIHAATMVAAGIFLVA, LLPLFIGIPYIMYLISLIGII, LGYMMLALGMGSYRAALFHLI, ALLFLGSGSIIHSMEAVVGYS, TTFLLGTLSLCGIPPLACFWS, WLYSPIFAVIACSTAGLTAFY, ILFPMLILVLFTLFVGAIGIP, FSVSIAFFGIFIAFFLYKPAY, and LLLYLFYVLIFLFIYYFLNLL.

This sequence belongs to the complex I subunit 5 family. In terms of assembly, NDH is composed of at least 16 different subunits, 5 of which are encoded in the nucleus.

The protein localises to the plastid. It is found in the chloroplast thylakoid membrane. The catalysed reaction is a plastoquinone + NADH + (n+1) H(+)(in) = a plastoquinol + NAD(+) + n H(+)(out). The enzyme catalyses a plastoquinone + NADPH + (n+1) H(+)(in) = a plastoquinol + NADP(+) + n H(+)(out). NDH shuttles electrons from NAD(P)H:plastoquinone, via FMN and iron-sulfur (Fe-S) centers, to quinones in the photosynthetic chain and possibly in a chloroplast respiratory chain. The immediate electron acceptor for the enzyme in this species is believed to be plastoquinone. Couples the redox reaction to proton translocation, and thus conserves the redox energy in a proton gradient. The protein is NAD(P)H-quinone oxidoreductase subunit 5, chloroplastic (ndhF) of Carica papaya (Papaya).